A 173-amino-acid chain; its full sequence is MPRSQKNDNFIDKTFTVLADIVLKILPTSKEEKEAFSYYRDGMSAQSEGEYAEALENYYEALKLEEDPYDRSYILYNIGLIYASNGEYVKALEYYHQGLELNFKLPQALNNIAVIYHYQGVQAIEDKDTELSKLMFDKAAQYWQQAIKLAPDNYIEAQNWLKTTGRMRNIQGY.

TPR repeat units follow at residues 35 to 68 (AFSYYRDGMSAQSEGEYAEALENYYEALKLEEDP), 72 to 105 (SYILYNIGLIYASNGEYVKALEYYHQGLELNFKL), and 120 to 153 (GVQAIEDKDTELSKLMFDKAAQYWQQAIKLAPDN).

The protein belongs to the Ycf3 family.

The protein resides in the plastid. The protein localises to the chloroplast thylakoid membrane. In terms of biological role, essential for the assembly of the photosystem I (PSI) complex. May act as a chaperone-like factor to guide the assembly of the PSI subunits. This is Photosystem I assembly protein Ycf3 from Pyropia yezoensis (Susabi-nori).